The sequence spans 116 residues: POU domain, class 4, transcription factor 1 (116 aa).

Positions 1 to 54 (VTQADVGSALANLKIPGVGSLSQSTICRFESLTLSHNNMIALKPILQAWLEEAE) constitute a POU-specific domain. A disordered region spans residues 56–79 (AQREKMNKPELFNGGEKKRKRTSI). The segment at residues 72–116 (KKRKRTSIAAPEKRSLEAYFAVQPRPSSEKIAAIAEKLDLKKNVV) is a DNA-binding region (homeobox).

It belongs to the POU transcription factor family. Class-4 subfamily.

Its subcellular location is the nucleus. It is found in the cytoplasm. Functionally, multifunctional transcription factor with different regions mediating its different effects. Acts by binding (via its C-terminal domain) to sequences related to the consensus octamer motif 5'-ATGCAAAT-3' in the regulatory regions of its target genes. Regulates the expression of specific genes involved in differentiation and survival within a subset of neuronal lineages. It has been shown that activation of some of these genes requires its N-terminal domain, maybe through a neuronal-specific cofactor. The polypeptide is POU domain, class 4, transcription factor 1 (POU4F1) (Gallus gallus (Chicken)).